The sequence spans 440 residues: MTFLPQEFIRKVRDRAPLDTADVARFVQGVTAGDVTEGQIAAFAMAVYFNELPLSARIALTLAQRDSGDVLDWRGARLNGPVVDKHSTGGVGDLTSLVIGPMVAACGGYVPMISGRGLGHTGGTLDKLEAIPGYDVAPSVDMLRRVVRDAGLAIVGQTAQLAPADKRIYAVRDVTATVESISLITASILSKKLAAGVGALAMDVKVGSGAFMPSAEQSAELARSIVDVGNGAGMRTAATLTDMNQALAPCAGNAIEVRCAIDFLTGAARPARLEAVSFALAAQMLTMGGLAADAHDARRRLRAVLESGAAAERFARMVAALGGPADLVERPERHLPRAAAAAPVAAARAGWIERIDARALGLAVVGLGGGRAKIGDTLDYSVGLSALAELGERVEAGQPLATVHARDADSAAQATDAVRRAYRIGAEPPAQTRVVHAVIE.

This sequence belongs to the thymidine/pyrimidine-nucleoside phosphorylase family. Homodimer.

It catalyses the reaction thymidine + phosphate = 2-deoxy-alpha-D-ribose 1-phosphate + thymine. The protein operates within pyrimidine metabolism; dTMP biosynthesis via salvage pathway; dTMP from thymine: step 1/2. The enzymes which catalyze the reversible phosphorolysis of pyrimidine nucleosides are involved in the degradation of these compounds and in their utilization as carbon and energy sources, or in the rescue of pyrimidine bases for nucleotide synthesis. The polypeptide is Thymidine phosphorylase (Burkholderia pseudomallei (strain K96243)).